The chain runs to 348 residues: Dihydroorotase (348 aa).

His17 and His19 together coordinate Zn(2+). Residues 19 to 21 and Asn45 each bind substrate; that span reads HLR. Residues Lys103, His140, and His178 each coordinate Zn(2+). Lys103 bears the N6-carboxylysine mark. His140 is a substrate binding site. Leu223 lines the substrate pocket. Zn(2+) is bound at residue Asp251. Residue Asp251 is part of the active site. Substrate is bound by residues His255 and Ala267.

Belongs to the metallo-dependent hydrolases superfamily. DHOase family. Class II DHOase subfamily. Homodimer. Zn(2+) serves as cofactor.

It catalyses the reaction (S)-dihydroorotate + H2O = N-carbamoyl-L-aspartate + H(+). The protein operates within pyrimidine metabolism; UMP biosynthesis via de novo pathway; (S)-dihydroorotate from bicarbonate: step 3/3. In terms of biological role, catalyzes the reversible cyclization of carbamoyl aspartate to dihydroorotate. In Salmonella paratyphi B (strain ATCC BAA-1250 / SPB7), this protein is Dihydroorotase.